The sequence spans 148 residues: Major microfilarial sheath protein (148 aa).

A signal peptide spans 1-18 (MCCKAILSFCILSSLGNA). Residues 19–43 (LYFGSHRPQYLREVGQRQYPFEPQA) constitute a propeptide, removed in mature form. 5 consecutive repeats follow at residues 46-50 (MLPVP), 54-58 (MGPQP), 59-63 (MGPQP), 64-68 (MEPQP), and 71-75 (MGPQS). The interval 46–75 (MLPVPQQPMGPQPMGPQPMEPQPLPMGPQS) is repeat-rich region. The segment covering 52–73 (QPMGPQPMGPQPMEPQPLPMGP) has biased composition (pro residues). The interval 52–80 (QPMGPQPMGPQPMEPQPLPMGPQSPQMQV) is disordered.

The protein to B.pahangi filarial sheath protein. In terms of processing, O-glycosylated.

This Litomosoides carinii protein is Major microfilarial sheath protein (GP22).